The sequence spans 383 residues: Alkanesulfonate monooxygenase (383 aa).

This sequence belongs to the SsuD family. Homotetramer.

It carries out the reaction an alkanesulfonate + FMNH2 + O2 = an aldehyde + FMN + sulfite + H2O + 2 H(+). Its function is as follows. Catalyzes the desulfonation of aliphatic sulfonates. This Erwinia pyrifoliae (strain DSM 12163 / CIP 106111 / Ep16/96) protein is Alkanesulfonate monooxygenase.